The primary structure comprises 459 residues: Cell division protein FtsZ (459 aa).

GTP is bound by residues 25-29 (GAGSN), 112-114 (GTG), Glu143, Arg147, and Asp191. Disordered regions lie at residues 383 to 405 (DQAP…DAGE) and 427 to 459 (IPER…KKRD).

The protein belongs to the FtsZ family. Homodimer. Polymerizes to form a dynamic ring structure in a strictly GTP-dependent manner. Interacts directly with several other division proteins.

It localises to the cytoplasm. Its function is as follows. Essential cell division protein that forms a contractile ring structure (Z ring) at the future cell division site. The regulation of the ring assembly controls the timing and the location of cell division. One of the functions of the FtsZ ring is to recruit other cell division proteins to the septum to produce a new cell wall between the dividing cells. Binds GTP and shows GTPase activity. This chain is Cell division protein FtsZ, found in Rickettsia bellii (strain RML369-C).